A 2254-amino-acid polypeptide reads, in one-letter code: Acetyl-CoA carboxylase 1 (2254 aa).

The Biotin carboxylation domain occupies 36–543 (PIHSILIANN…HTGWLDSRIA (508 aa)). One can recognise an ATP-grasp domain in the interval 189 to 381 (NSNLVTIPEE…LPAAQVAVGM (193 aa)). ATP is bound at residue 215 to 272 (CQVVGYPAMIKASWGGGGKGIRKVHNDDEVRALFKQVQGEVPGSPIFIMKVASQSRHL). Residues E338, E352, and N354 each contribute to the Mg(2+) site. 3 residues coordinate Mn(2+): E338, E352, and N354. R356 is a catalytic residue. The 75-residue stretch at 670-744 (LQNDHDPSKL…QAGELIANLD (75 aa)) folds into the Biotinyl-binding domain. The residue at position 711 (K711) is an N6-biotinyllysine. The residue at position 1031 (T1031) is a Phosphothreonine. S1192 carries the post-translational modification Phosphoserine. The region spanning 1492-1831 (QYKPLGYLDR…YVGGPLPVLA (340 aa)) is the CoA carboxyltransferase N-terminal domain. The carboxyltransferase stretch occupies residues 1492–2150 (QYKPLGYLDR…ESSLVKNVRE (659 aa)). Residues R1740, K2041, and R2043 each coordinate CoA. A CoA carboxyltransferase C-terminal domain is found at 1835-2150 (PPERIVEYVP…ESSLVKNVRE (316 aa)).

Homodimer. Requires biotin as cofactor. Mg(2+) is required as a cofactor. It depends on Mn(2+) as a cofactor. Expressed in roots, trichomes, epidermal leaf cells, siliques, petals, anthers, and seeds.

Its subcellular location is the cytoplasm. The protein localises to the cytosol. It carries out the reaction hydrogencarbonate + acetyl-CoA + ATP = malonyl-CoA + ADP + phosphate + H(+). The enzyme catalyses N(6)-biotinyl-L-lysyl-[protein] + hydrogencarbonate + ATP = N(6)-carboxybiotinyl-L-lysyl-[protein] + ADP + phosphate + H(+). It participates in lipid metabolism; malonyl-CoA biosynthesis; malonyl-CoA from acetyl-CoA: step 1/1. Multifunctional enzyme that catalyzes the carboxylation of acetyl-CoA, forming malonyl-CoA, which is used in the plastid for fatty acid synthesis and in the cytosol in various biosynthetic pathways including fatty acid elongation. Required for very long chain fatty acids elongation. Necessary for embryo and plant development. Plays a central function in embryo morphogenesis, especially in apical meristem development. Involved in cell proliferation and tissue patterning. May act as a repressor of cytokinin response. In Arabidopsis thaliana (Mouse-ear cress), this protein is Acetyl-CoA carboxylase 1 (ACC1).